Here is an 883-residue protein sequence, read N- to C-terminus: Serine/threonine-protein phosphatase BSL1 homolog (883 aa).

Kelch repeat units follow at residues 64–113 (ASSG…AVGT), 221–271 (MLLL…VFVG), 273–323 (RLHV…DHDA), and 341–387 (QIYI…NRNH). Disordered stretches follow at residues 381–402 (ENQNRNHNFNSDSPTTNNSTDK), 430–466 (SHASSEDSLSEGIGSESPLSETSPMPEDLDDGGSLEP), and 499–525 (NESRRMHPSSNDQSYPAKKALNRQRSP). Polar residues predominate over residues 385–399 (RNHNFNSDSPTTNNS). Mn(2+) is bound by residues aspartate 586, histidine 588, aspartate 620, and asparagine 652. Catalysis depends on histidine 653, which acts as the Proton donor. Positions 705 and 784 each coordinate Mn(2+). A disordered region spans residues 861–883 (QRPPTPTRGRPQSASDRNSLAYI). The segment covering 872–883 (QSASDRNSLAYI) has biased composition (polar residues).

The protein belongs to the PPP phosphatase family. BSU subfamily. As to quaternary structure, interacts with the phosphorylated form of BSK3. It depends on Mn(2+) as a cofactor.

The protein resides in the nucleus. The catalysed reaction is O-phospho-L-seryl-[protein] + H2O = L-seryl-[protein] + phosphate. It carries out the reaction O-phospho-L-threonyl-[protein] + H2O = L-threonyl-[protein] + phosphate. The chain is Serine/threonine-protein phosphatase BSL1 homolog (BSL1) from Oryza sativa subsp. japonica (Rice).